Consider the following 470-residue polypeptide: Cysteine--tRNA ligase (470 aa).

C29 contributes to the Zn(2+) binding site. A 'HIGH' region motif is present at residues 31–41 (PTVYNYAHIGN). Residues C211, H236, and E240 each coordinate Zn(2+). A 'KMSKS' region motif is present at residues 273-277 (KMSKS). K276 contacts ATP.

Belongs to the class-I aminoacyl-tRNA synthetase family. As to quaternary structure, monomer. The cofactor is Zn(2+).

It is found in the cytoplasm. It carries out the reaction tRNA(Cys) + L-cysteine + ATP = L-cysteinyl-tRNA(Cys) + AMP + diphosphate. This Phenylobacterium zucineum (strain HLK1) protein is Cysteine--tRNA ligase.